The following is a 432-amino-acid chain: Adhesin YadA (432 aa).

Residues 1 to 25 form the signal peptide; sequence MTKDFKISVSAALISALFSSPYAFA. The surface exposed passenger domain stretch occupies residues 26 to 340; it reads EEPEDGNDGI…KKAISESNQY (315 aa). Residues 242 to 263 adopt a coiled-coil conformation; the sequence is VNVAQLKKEMAETLENARKETL. The segment at 341–379 is outer membrane translocation of the passenger domain; it reads TDHKFSQLDNRLDKLDKRVDKGLASSAALNSLFQPYGVG. A run of 4 beta stranded transmembrane segments spans residues 379–389, 393–404, 411–417, and 421–432; these read GKVNFTAGVGG, SQALAIGSGYRV, KAGVAYA, and NVMYNASFNIEW. The tract at residues 380–432 is translocator domain; sequence KVNFTAGVGGYRSSQALAIGSGYRVNESVALKAGVAYAGSSNVMYNASFNIEW.

It belongs to the autotransporter-2 (AT-2) (TC 1.B.40) family. As to quaternary structure, homotrimer.

The protein localises to the cell surface. It is found in the cell outer membrane. Collagen-binding outer membrane protein forming a fibrillar matrix on the bacterial cell surface. Promotes attachment to eukaryotic cells and after invasion, is the major adhesin in infected tissue. Constitutes an alternative uptake pathway under conditions in which invasin synthesis is repressed. In Yersinia pseudotuberculosis serotype I (strain IP32953), this protein is Adhesin YadA (yadA).